Consider the following 297-residue polypeptide: ClpXP adapter protein SpxH (297 aa).

It belongs to the SpxH family. Interacts with Spx.

It localises to the cytoplasm. Functionally, adapter protein required for efficient degradation of Spx by ClpXP under non-stress conditions. Interaction with Spx stabilizes Spx and exposes the C-terminus of Spx for recognition and proteolysis by ClpXP. The chain is ClpXP adapter protein SpxH from Bacillus cereus (strain ZK / E33L).